We begin with the raw amino-acid sequence, 370 residues long: Alpha-ketoglutarate-dependent xanthine dioxygenase xanA (370 aa).

Residue His-107 participates in substrate binding. Residues His-149 and Asp-151 each coordinate Fe cation. 2-oxoglutarate-binding residues include Thr-195 and Trp-325. Position 340 (His-340) interacts with Fe cation. Residue Arg-352 participates in 2-oxoglutarate binding.

This sequence belongs to the TfdA dioxygenase family. The cofactor is Fe(2+). Post-translationally, glycosylated. Is subject to both N- and O-linked glycosylation. In terms of processing, phosphorylated.

The protein localises to the cytoplasm. It is found in the cytosol. The catalysed reaction is xanthine + 2-oxoglutarate + O2 = urate + succinate + CO2. Its activity is regulated as follows. Cu(2+) and Zn(2+) completely inhibit the xanthine dioxygenase activity, whereas Co(2+), Mn(2+), and Ni(2+) partially inhibit the activity. The inactive metal ions are presumed to compete for the Fe(2+)-binding site. N-oxalylglycine (NOG), a known inhibitor of several Fe(2+)/alpha-ketoglutarate-dependent dioxygenase family members, competes with alpha-ketoglutarate and provides a Ki of 0.12 uM for inhibition. 6,8-dihydroxypurine acts as a slow-binding competitive inhibitor. The thiol-specific inhibitors 5,5'-dithiobis(2-nitrobenzoic acid) (DTNB) and iodoacetamide, inhibit also the catalytic activity. Functionally, alpha-ketoglutarate-dependent xanthine dioxygenase is a non-heme mononuclear Fe(2+) enzyme that decarboxylates alpha-ketoglutarate to succinate and CO(2) while hydroxylating xanthine to generate uric acid. Allows xanthine utilization as a nitrogen source. Whereas xanA is highly specific for xanthine, alpha-ketoadipic acid can replace alpha-ketoglutarate as a cosubstrate. Exhibits ferroxidase activity in the absence of substrates. This Emericella nidulans (Aspergillus nidulans) protein is Alpha-ketoglutarate-dependent xanthine dioxygenase xanA.